Here is a 266-residue protein sequence, read N- to C-terminus: tRNA (guanine-N(7)-)-methyltransferase (266 aa).

Residues 1–32 (MSDHGRMHIPESGLATPAAAHSDDPPHPHFNR) are disordered. Positions 96, 121, 148, and 171 each coordinate S-adenosyl-L-methionine. Residue aspartate 171 is part of the active site. Substrate is bound by residues lysine 175 and aspartate 207.

This sequence belongs to the class I-like SAM-binding methyltransferase superfamily. TrmB family.

The catalysed reaction is guanosine(46) in tRNA + S-adenosyl-L-methionine = N(7)-methylguanosine(46) in tRNA + S-adenosyl-L-homocysteine. It participates in tRNA modification; N(7)-methylguanine-tRNA biosynthesis. Its function is as follows. Catalyzes the formation of N(7)-methylguanine at position 46 (m7G46) in tRNA. The chain is tRNA (guanine-N(7)-)-methyltransferase from Mycolicibacterium vanbaalenii (strain DSM 7251 / JCM 13017 / BCRC 16820 / KCTC 9966 / NRRL B-24157 / PYR-1) (Mycobacterium vanbaalenii).